Here is a 368-residue protein sequence, read N- to C-terminus: G-protein coupled receptor 183-A (368 aa).

Over 1-27 (METTSANFTQNDSNVCTNLYNHRGWAQ) the chain is Extracellular. N-linked (GlcNAc...) asparagine glycosylation is found at N7 and N11. The helical transmembrane segment at 28-53 (YFLPAMYSLICIVGLLGNVLALHVIW) threads the bilayer. Residues 54–73 (PNLKKINSTTLYSANLVVSD) are Cytoplasmic-facing. Residues 74 to 91 (ILFSLALPLRVVYYARGF) form a helical membrane-spanning segment. The Extracellular segment spans residues 92–101 (DWPMGEGLCK). The cysteines at positions 100 and 178 are disulfide-linked. The helical transmembrane segment at 102 to 123 (AVALLFYINMYAGVNFMTCLSV) threads the bilayer. Residues 124-145 (DRFIAVVLPLRFSRFRKVQKVR) are Cytoplasmic-facing. Residues 146–164 (YICGVVWVVVLMQTLPLLS) traverse the membrane as a helical segment. The Extracellular portion of the chain corresponds to 165–189 (MPMTNIEQSGHITCMEYPNFEKIDN). The chain crosses the membrane as a helical span at residues 190–212 (LPVMLIGAVVLGFGIPVITILVC). The Cytoplasmic portion of the chain corresponds to 213–238 (YTALCLKLRHLAKSNKLTEKSGRSSK). Residues 239-262 (AIGVICTVILVFVVCYSPYHVDLL) traverse the membrane as a helical segment. Topologically, residues 263–282 (QYMIKKLRYDPDCSELHKFQ) are extracellular. Residues 283-307 (ISLHITVCFMNLNSCLDPFIYFFAC) traverse the membrane as a helical segment. The Cytoplasmic portion of the chain corresponds to 308 to 368 (KGYKKKVLKL…SSVLLNSLEQ (61 aa)).

This sequence belongs to the G-protein coupled receptor 1 family.

The protein localises to the cell membrane. G-protein coupled receptor expressed in lymphocytes that acts as a chemotactic receptor for B-cells, T-cells, splenic dendritic cells, monocytes/macrophages and astrocytes. Receptor for oxysterol 7-alpha,25-dihydroxycholesterol (7-alpha,25-OHC) and other related oxysterols. Mediates cell positioning and movement of a number of cells by binding the 7-alpha,25-OHC ligand that forms a chemotactic gradient. Binding of 7-alpha,25-OHC mediates the correct localization of B-cells during humoral immune responses. The sequence is that of G-protein coupled receptor 183-A (gpr183a) from Danio rerio (Zebrafish).